Here is a 957-residue protein sequence, read N- to C-terminus: AP2-associated protein kinase 1 (957 aa).

Methionine 1 is modified (N-acetylmethionine). A compositionally biased stretch (basic and acidic residues) spans 1–11 (MKKFFDSRREQ). A disordered region spans residues 1 to 25 (MKKFFDSRREQGGSGLGSGSSGGGG). The segment covering 12-25 (GGSGLGSGSSGGGG) has biased composition (gly residues). Serine 14 carries the post-translational modification Phosphoserine. One can recognise a Protein kinase domain in the interval 46–315 (VTVDEVLAEG…QVSYFSFKLL (270 aa)). ATP-binding positions include 52-60 (LAEGGFAIV) and lysine 74. Aspartate 176 serves as the catalytic Proton acceptor. Tyrosine 234 bears the Phosphotyrosine mark. Serine 235 carries the phosphoserine modification. 2 disordered regions span residues 326 to 506 (NSPI…AVHP) and 563 to 629 (TAAA…AGHR). Residues threonine 354 and threonine 389 each carry the phosphothreonine modification. At arginine 391 the chain carries Omega-N-methylarginine. Pro residues predominate over residues 436–448 (PQAPPTSQQPPSA). Residue threonine 441 is modified to Phosphothreonine. 2 stretches are compositionally biased toward low complexity: residues 449-506 (PAQA…AVHP) and 563-601 (TAAA…KVQT). Threonine 602 is subject to Phosphothreonine. Polar residues predominate over residues 607–617 (IQGQKLGSLTP). At serine 614 the chain carries Phosphoserine. Residue threonine 616 is modified to Phosphothreonine. Residues serine 619, serine 620, serine 633, and serine 646 each carry the phosphoserine modification. The residue at position 649 (threonine 649) is a Phosphothreonine. A disordered region spans residues 660-697 (SLNKSKSATTTPSGSPRASQQNVYNPSEGSTWNPFDDD). Polar residues predominate over residues 668-692 (TTTPSGSPRASQQNVYNPSEGSTWN). A Phosphotyrosine modification is found at tyrosine 683. Serine 727, serine 842, serine 933, and serine 934 each carry phosphoserine. The tract at residues 819–956 (EKADVAVESL…SLLLVDQLID (138 aa)) is clathrin-binding domain (CBD). Disordered regions lie at residues 832–855 (LEPP…TDSL) and 919–941 (VLIT…ESSL). Polar residues predominate over residues 840–855 (LPSQTESVTSNRTDSL). Residues 927–940 (GGHSRNSSGSSESS) show a composition bias toward low complexity.

The protein belongs to the protein kinase superfamily. Ser/Thr protein kinase family. Interacts (via CBD domain) with clathrin. Interacts with AP-2 complex. Interacts with NUMB. Interacts with alpha-adaptin. Interacts with EPS15 isoform 2. Interacts with membrane-bound activated NOTCH1 but not with the inactive full-length form of NOTCH1. Preferentially interacts with monoubiquitinated activated NOTCH1 compared to the non-ubiquitinated form. Post-translationally, autophosphorylated. As to expression, detected in brain (at protein level).

The protein resides in the cell membrane. Its subcellular location is the membrane. It localises to the clathrin-coated pit. It is found in the presynapse. The catalysed reaction is L-seryl-[protein] + ATP = O-phospho-L-seryl-[protein] + ADP + H(+). The enzyme catalyses L-threonyl-[protein] + ATP = O-phospho-L-threonyl-[protein] + ADP + H(+). Stimulated by clathrin. Functionally, regulates clathrin-mediated endocytosis by phosphorylating the AP2M1/mu2 subunit of the adaptor protein complex 2 (AP-2) which ensures high affinity binding of AP-2 to cargo membrane proteins during the initial stages of endocytosis. Preferentially, may phosphorylate substrates on threonine residues. Regulates phosphorylation of other AP-2 subunits as well as AP-2 localization and AP-2-mediated internalization of ligand complexes. Phosphorylates NUMB and regulates its cellular localization, promoting NUMB localization to endosomes. Binds to and stabilizes the activated form of NOTCH1, increases its localization in endosomes and regulates its transcriptional activity. The sequence is that of AP2-associated protein kinase 1 (AAK1) from Bos taurus (Bovine).